Here is a 319-residue protein sequence, read N- to C-terminus: GATA transcription factor 18 (319 aa).

The span at 1–15 shows a compositional bias: low complexity; the sequence is MPDAAAAAAAAQDAD. The tract at residues 1 to 74 is disordered; it reads MPDAAAAAAA…AAPEPVSALL (74 aa). Acidic residues predominate over residues 31-60; the sequence is DNDDDDGDDGTEEDEEEDDDEEGDEEELPP. A Tify domain is found at 74-109; sequence LPGSPNQLTLLFQGEVYVFESVTPEKVQAVLLLLGR. In terms of domain architecture, CCT spans 143 to 185; the sequence is RVASLIRFREKRKERNFDKKIRYAVRKEVALRMQRRKGQFAGR. Residues 215-242 form a GATA-type zinc finger; it reads CQNCGTSEKMTPAMRRGPAGPRTLCNAC. The disordered stretch occupies residues 292–319; sequence ITASHGEVMGDSTPANEAEIGAPKAQSQ.

Belongs to the type IV zinc-finger family. Class C subfamily.

It is found in the nucleus. Transcriptional activator that specifically binds 5'-GATA-3' or 5'-GAT-3' motifs within gene promoters. In Oryza sativa subsp. japonica (Rice), this protein is GATA transcription factor 18.